The chain runs to 231 residues: Antiholin-like protein LrgB (231 aa).

5 consecutive transmembrane segments (helical) span residues 7 to 24 (PYFG…GTFL), 34 to 56 (FTPL…FSYA), 91 to 113 (WWQI…YLLA), 149 to 171 (ITAF…FLKV), and 207 to 229 (ASIA…VQLI).

It belongs to the CidB/LrgB family. LrgB subfamily.

It is found in the cell membrane. Functionally, inhibits the expression or activity of extracellular murein hydrolases by interacting, possibly with LrgA, with the holin-like protein CidA. The LrgAB and CidA proteins may affect the proton motive force of the membrane. May be involved in programmed cell death (PCD), possibly triggering PCD in response to antibiotics and environmental stresses. This chain is Antiholin-like protein LrgB, found in Bacillus subtilis (strain 168).